The sequence spans 287 residues: uncharacterized protein (287 aa).

The signal sequence occupies residues Met-1–Val-31.

The protein belongs to the MG439/MG440 family.

This is an uncharacterized protein from Mycoplasma pneumoniae (strain ATCC 29342 / M129 / Subtype 1) (Mycoplasmoides pneumoniae).